We begin with the raw amino-acid sequence, 435 residues long: Eukaryotic peptide chain release factor subunit 1-3 (435 aa).

At A2 the chain carries N-acetylalanine.

Belongs to the eukaryotic release factor 1 family. Heterodimer of two subunits, one of which binds GTP.

It localises to the cytoplasm. Functionally, directs the termination of nascent peptide synthesis (translation) in response to the termination codons UAA, UAG and UGA. Modulates plant growth and development. In Brassica oleracea var. botrytis (Cauliflower), this protein is Eukaryotic peptide chain release factor subunit 1-3.